We begin with the raw amino-acid sequence, 310 residues long: Aspartate carbamoyltransferase catalytic subunit (310 aa).

Carbamoyl phosphate is bound by residues Arg-55 and Thr-56. L-aspartate is bound at residue Lys-85. The carbamoyl phosphate site is built by Arg-106, His-135, and Gln-138. Positions 168 and 230 each coordinate L-aspartate. Residues Leu-268 and Pro-269 each coordinate carbamoyl phosphate.

This sequence belongs to the aspartate/ornithine carbamoyltransferase superfamily. ATCase family. Heterododecamer (2C3:3R2) of six catalytic PyrB chains organized as two trimers (C3), and six regulatory PyrI chains organized as three dimers (R2).

The enzyme catalyses carbamoyl phosphate + L-aspartate = N-carbamoyl-L-aspartate + phosphate + H(+). The protein operates within pyrimidine metabolism; UMP biosynthesis via de novo pathway; (S)-dihydroorotate from bicarbonate: step 2/3. Its function is as follows. Catalyzes the condensation of carbamoyl phosphate and aspartate to form carbamoyl aspartate and inorganic phosphate, the committed step in the de novo pyrimidine nucleotide biosynthesis pathway. The polypeptide is Aspartate carbamoyltransferase catalytic subunit (Buchnera aphidicola subsp. Acyrthosiphon pisum (strain APS) (Acyrthosiphon pisum symbiotic bacterium)).